A 299-amino-acid polypeptide reads, in one-letter code: Acetaldehyde dehydrogenase 1 (299 aa).

The active-site Acyl-thioester intermediate is Cys130. NAD(+)-binding positions include 161-169 (SVGPGTRKN) and Asn272.

This sequence belongs to the acetaldehyde dehydrogenase family.

It catalyses the reaction acetaldehyde + NAD(+) + CoA = acetyl-CoA + NADH + H(+). In Burkholderia cenocepacia (strain ATCC BAA-245 / DSM 16553 / LMG 16656 / NCTC 13227 / J2315 / CF5610) (Burkholderia cepacia (strain J2315)), this protein is Acetaldehyde dehydrogenase 1 (mhpF).